A 689-amino-acid chain; its full sequence is Glycine--tRNA ligase beta subunit (689 aa).

This sequence belongs to the class-II aminoacyl-tRNA synthetase family. Tetramer of two alpha and two beta subunits.

The protein resides in the cytoplasm. It catalyses the reaction tRNA(Gly) + glycine + ATP = glycyl-tRNA(Gly) + AMP + diphosphate. The chain is Glycine--tRNA ligase beta subunit from Shewanella pealeana (strain ATCC 700345 / ANG-SQ1).